An 805-amino-acid chain; its full sequence is Transcription factor SFL1 (805 aa).

Over residues 1–24 the composition is skewed to low complexity; sequence MSHLVSSSLGTTTTATPTSRSPHT. The tract at residues 1–110 is disordered; sequence MSHLVSSSLG…NNNVSNNNST (110 aa). Positions 25–69 are enriched in polar residues; that stretch reads NHSTPYNQNSITSNRSSPVPKNSVNSRIIPQTMNPPIDMKSNNIL. Basic and acidic residues predominate over residues 71 to 85; the sequence is PEKDTDTSRGDHSES. Positions 86-110 are enriched in low complexity; that stretch reads KASSISSASGTTTTNNNNVSNNNST. The DNA-binding element occupies 117–226; the sequence is FIHKLYDMLH…LKNIKRRSSK (110 aa). 5 disordered regions span residues 273 to 336, 438 to 483, 513 to 675, 691 to 746, and 759 to 805; these read MQSP…NQSP, QSNF…VAPQ, REDS…PAPQ, HQKS…SENH, and VSEL…RKLE. The span at 295–310 shows a compositional bias: low complexity; that stretch reads QQQQQQQQQQQQQQQQ. Composition is skewed to polar residues over residues 454 to 480 and 533 to 556; these read HGNS…NLNV and PSRN…NFNP. Residues 557 to 566 are compositionally biased toward low complexity; that stretch reads QQSQSQSQVQ. Composition is skewed to polar residues over residues 581–597, 604–614, and 622–635; these read ESTY…SQIL, VNHSPLVQQQQ, and NDSS…SSLP. A compositionally biased stretch (low complexity) spans 637–659; it reads TRPLSRQQQQQQQTLHHPSTTSS. Residues 716–738 are compositionally biased toward polar residues; the sequence is PISSTAPTTMITSTSKPTSTSGA.

This sequence belongs to the HSF family.

The protein localises to the nucleus. In terms of biological role, transcription factor that plays a role of repressor of filamentous growth and flocculation. Antagonizes functions of SFL2 and FLO8. Plays a role in the hyphal repression induced by secreted factors like dodecanol by competitors such as Pseudomonas aeruginosa and Burkholderia cenocepacia. This Candida albicans (strain SC5314 / ATCC MYA-2876) (Yeast) protein is Transcription factor SFL1 (SFL1).